The primary structure comprises 298 residues: tRNA pseudouridine synthase B (298 aa).

Asp-39 serves as the catalytic Nucleophile.

Belongs to the pseudouridine synthase TruB family. Type 1 subfamily.

The catalysed reaction is uridine(55) in tRNA = pseudouridine(55) in tRNA. Responsible for synthesis of pseudouridine from uracil-55 in the psi GC loop of transfer RNAs. This is tRNA pseudouridine synthase B from Lactobacillus delbrueckii subsp. bulgaricus (strain ATCC BAA-365 / Lb-18).